A 413-amino-acid polypeptide reads, in one-letter code: Inactive squalene synthase 2 (413 aa).

Position 2 is an N-acetylglycine (Gly-2). The next 2 membrane-spanning stretches (helical) occupy residues 283-303 (AIFQ…ALCY) and 390-410 (AIFV…LKAN).

The protein belongs to the phytoene/squalene synthase family. It depends on Mg(2+) as a cofactor. Requires Mn(2+) as cofactor. Mostly expressed in hypocotyls, leaves and cotyledons, and, to a lower extent, in stems.

It localises to the endoplasmic reticulum membrane. This Arabidopsis thaliana (Mouse-ear cress) protein is Inactive squalene synthase 2.